Here is a 399-residue protein sequence, read N- to C-terminus: LEM domain-containing protein Bocksbeutel (399 aa).

In terms of domain architecture, LEM spans 4-48; it reads LSYLDTLGNKELLAKCLEHGLPGVPVTDSTRSVIIRRLKAKITGV. Disordered stretches follow at residues 49-103, 119-141, and 233-287; these read PLNK…EQSR, SVQT…SYMV, and NSTS…SNLA. Polar residues-rich tracts occupy residues 68–77 and 89–99; these read HGSQVTTPTS and GRTSSNNNKIS. A compositionally biased stretch (polar residues) spans 233-256; it reads NSTSYEESSTYNPKLSPISPRNTF. A helical transmembrane segment spans residues 377 to 397; it reads FYLILVVSVMLATMVYVVLTP.

Its subcellular location is the nucleus inner membrane. It is found in the cytoplasm. The protein localises to the nucleus. It localises to the nucleoplasm. The protein resides in the endoplasmic reticulum. Functionally, inner nuclear membrane protein. May have a role in maintaining the structural integrity of the nuclear lamina. During pupal development, plays essential and redundant functions with the other LEM domain proteins; MAN1 and Ote. Also has a redundant but important role with Ote in larval development. The sequence is that of LEM domain-containing protein Bocksbeutel from Drosophila melanogaster (Fruit fly).